The chain runs to 176 residues: Translation initiation factor IF-3 (176 aa).

The protein belongs to the IF-3 family. As to quaternary structure, monomer.

The protein localises to the cytoplasm. In terms of biological role, IF-3 binds to the 30S ribosomal subunit and shifts the equilibrium between 70S ribosomes and their 50S and 30S subunits in favor of the free subunits, thus enhancing the availability of 30S subunits on which protein synthesis initiation begins. This chain is Translation initiation factor IF-3, found in Streptococcus mutans serotype c (strain ATCC 700610 / UA159).